A 463-amino-acid polypeptide reads, in one-letter code: uncharacterized protein (463 aa).

This is an uncharacterized protein from Lepidoptera (butterflies and moths).